The sequence spans 140 residues: Probable lipoprotein LppE (140 aa).

The N-terminal stretch at 1–21 (MCNRLVTVTGVAMVVAAGLSA) is a signal peptide. The N-palmitoyl cysteine moiety is linked to residue cysteine 22. Cysteine 22 carries the S-diacylglycerol cysteine lipid modification.

The protein belongs to the mycobacterial 19 kDa antigen family.

The protein localises to the cell membrane. The sequence is that of Probable lipoprotein LppE (lppE) from Mycobacterium tuberculosis (strain ATCC 25618 / H37Rv).